Reading from the N-terminus, the 339-residue chain is MIAEMQTMLGPLWPVAWNLLKIIAIVGPLMGAVAYLTLAERKVIGFMQVRMGPNRVGYRGLLQPLADGVKLLMKEIIIPSAASRTLFLLGPVLAIAPALAAWAVVPFDLTLVLADIDAGLLYILAMTSVGVYGVIIAGWASNSKYAFLGAMRSAAQIVSYEIAMGFALVGVLMSANSLNLGKIVLAQSGGFWEWYWLPLFPLFIVYFISAVAETNRAPFDVAEGESEIVAGFHVEYSGMAFAVFFLAEYANMILVAMLAALMFLGGWLSPVPFLPDSILWLLFKVAALLFFFLWFRATFPRYRYDQIMRLGWKVFIPVTLVWILFVGAMMQTRWAYLFH.

8 helical membrane-spanning segments follow: residues 19–39 (LLKI…LTLA), 87–107 (FLLG…VVPF), 120–140 (LLYI…AGWA), 153–173 (SAAQ…GVLM), 191–211 (FWEW…ISAV), 253–273 (ILVA…PVPF), 275–295 (PDSI…FLWF), and 310–330 (LGWK…GAMM).

This sequence belongs to the complex I subunit 1 family. NDH-1 is composed of 14 different subunits. Subunits NuoA, H, J, K, L, M, N constitute the membrane sector of the complex.

It localises to the cell inner membrane. It catalyses the reaction a quinone + NADH + 5 H(+)(in) = a quinol + NAD(+) + 4 H(+)(out). In terms of biological role, NDH-1 shuttles electrons from NADH, via FMN and iron-sulfur (Fe-S) centers, to quinones in the respiratory chain. The immediate electron acceptor for the enzyme in this species is believed to be ubiquinone. Couples the redox reaction to proton translocation (for every two electrons transferred, four hydrogen ions are translocated across the cytoplasmic membrane), and thus conserves the redox energy in a proton gradient. This subunit may bind ubiquinone. This chain is NADH-quinone oxidoreductase subunit H, found in Methylobacillus flagellatus (strain ATCC 51484 / DSM 6875 / VKM B-1610 / KT).